The primary structure comprises 358 residues: Type II restriction enzyme CviJI (358 aa).

It depends on Mg(2+) as a cofactor.

It carries out the reaction Endonucleolytic cleavage of DNA to give specific double-stranded fragments with terminal 5'-phosphates.. A P subtype restriction enzyme that recognizes the double-stranded sequence 5'-RGCY-3' and cleaves after G-2. In the presence of ATP, there is a relaxation of its specificity and it can cleave 5'-RGCN-3' and 5'-YGCY-3', but not 5'-YGCR-3' (R.CviJI* activity). This is Type II restriction enzyme CviJI from Paramecium bursaria Chlorella virus IL3A (PBCV-IL3A).